The primary structure comprises 436 residues: Adenylosuccinate synthetase (436 aa).

GTP contacts are provided by residues 12 to 18 (GDEGKGK) and 40 to 42 (GHT). D13 functions as the Proton acceptor in the catalytic mechanism. Mg(2+) contacts are provided by D13 and G40. Residues 13–16 (DEGK), 38–41 (NAGH), T128, R142, Q223, T238, and R302 contribute to the IMP site. H41 functions as the Proton donor in the catalytic mechanism. Substrate is bound at residue 298 to 304 (TTTGRRR). GTP is bound by residues R304, 330–332 (KLD), and 412–414 (SLG).

The protein belongs to the adenylosuccinate synthetase family. As to quaternary structure, homodimer. Mg(2+) serves as cofactor.

Its subcellular location is the cytoplasm. It carries out the reaction IMP + L-aspartate + GTP = N(6)-(1,2-dicarboxyethyl)-AMP + GDP + phosphate + 2 H(+). Its pathway is purine metabolism; AMP biosynthesis via de novo pathway; AMP from IMP: step 1/2. Plays an important role in the de novo pathway of purine nucleotide biosynthesis. Catalyzes the first committed step in the biosynthesis of AMP from IMP. This is Adenylosuccinate synthetase from Prochlorococcus marinus (strain MIT 9301).